Reading from the N-terminus, the 552-residue chain is Asparagine--tRNA ligase, cytoplasmic (552 aa).

The interval 1–23 (MSQVYVNEKTGADSTDVSGSEQQ) is disordered. Over residues 12 to 23 (ADSTDVSGSEQQ) the composition is skewed to polar residues.

It belongs to the class-II aminoacyl-tRNA synthetase family.

The protein resides in the cytoplasm. The enzyme catalyses tRNA(Asn) + L-asparagine + ATP = L-asparaginyl-tRNA(Asn) + AMP + diphosphate + H(+). The chain is Asparagine--tRNA ligase, cytoplasmic (DED81) from Debaryomyces hansenii (strain ATCC 36239 / CBS 767 / BCRC 21394 / JCM 1990 / NBRC 0083 / IGC 2968) (Yeast).